The sequence spans 246 residues: ATP synthase subunit a, chloroplastic (246 aa).

5 helical membrane-spanning segments follow: residues 35–55 (GQVLLTSWFVLGTVILFGLIA), 94–114 (VPFIGTIFIFVLVSNWSGALL), 132–152 (DINTTVALALLTSISYFYAGI), 198–218 (LVVGVLVALVPLIVPIPVMLL), and 219–239 (GVFTSAIQALVFATLAGAYIG).

Belongs to the ATPase A chain family. F-type ATPases have 2 components, CF(1) - the catalytic core - and CF(0) - the membrane proton channel. CF(1) has five subunits: alpha(3), beta(3), gamma(1), delta(1), epsilon(1). CF(0) has four main subunits: a, b, b' and c.

The protein localises to the plastid. The protein resides in the chloroplast thylakoid membrane. Its function is as follows. Key component of the proton channel; it plays a direct role in the translocation of protons across the membrane. In Stigeoclonium helveticum (Green alga), this protein is ATP synthase subunit a, chloroplastic.